Consider the following 447-residue polypeptide: Chromosomal replication initiator protein DnaA (447 aa).

The domain I, interacts with DnaA modulators stretch occupies residues 1–74; sequence MPDVESFWHS…TGFKLTGAEV (74 aa). A domain II region spans residues 74-109; that stretch reads VMPHFVVADEKDAALAQELEEPAEEEVVFSEQSKKA. The tract at residues 110 to 326 is domain III, AAA+ region; it reads MLNPKYTFDT…GALVRVQAFA (217 aa). Residues glycine 154, glycine 156, lysine 157, and threonine 158 each contribute to the ATP site. Residues 327 to 447 form a domain IV, binds dsDNA region; the sequence is TINGEDITTS…VSEIKNLLNS (121 aa).

Belongs to the DnaA family. Oligomerizes as a right-handed, spiral filament on DNA at oriC.

The protein localises to the cytoplasm. Its function is as follows. Plays an essential role in the initiation and regulation of chromosomal replication. ATP-DnaA binds to the origin of replication (oriC) to initiate formation of the DNA replication initiation complex once per cell cycle. Binds the DnaA box (a 9 base pair repeat at the origin) and separates the double-stranded (ds)DNA. Forms a right-handed helical filament on oriC DNA; dsDNA binds to the exterior of the filament while single-stranded (ss)DNA is stabiized in the filament's interior. The ATP-DnaA-oriC complex binds and stabilizes one strand of the AT-rich DNA unwinding element (DUE), permitting loading of DNA polymerase. After initiation quickly degrades to an ADP-DnaA complex that is not apt for DNA replication. Binds acidic phospholipids. Functionally, strand separation requires the DnaA boxes and adjacent DnaA-trio motifs as well as ATP. The polypeptide is Chromosomal replication initiator protein DnaA (Enterococcus faecalis (strain ATCC 700802 / V583)).